The chain runs to 123 residues: Methicillin resistance regulatory protein MecI (123 aa).

A DNA-binding region (H-T-H motif) is located at residues 7-71 (EISSAEWEVM…KDNKIFQYYS (65 aa)). The interval 74–123 (EESDIKYKTSKNFINKVYKGGFNSLVLNFVEKEDLSQDEIEELRNILNKK) is important for dimerization.

It belongs to the BlaI transcriptional regulatory family. In terms of assembly, monomer and homodimer. In terms of processing, upon exposure to beta-lactams, proteolytic cleavage at a single site impairs dimerization and abolishes repressor activity.

It is found in the cytoplasm. Functionally, transcriptional repressor that constitutively blocks the transcription of the gene for the penicillin-binding protein MecA. Binds DNA as a dimer. This Mammaliicoccus sciuri (Staphylococcus sciuri) protein is Methicillin resistance regulatory protein MecI (mecI).